The chain runs to 348 residues: Dihydroorotase (348 aa).

Positions 17 and 19 each coordinate Zn(2+). Substrate is bound by residues 19–21 (HLR) and asparagine 45. Residues lysine 103, histidine 140, and histidine 178 each coordinate Zn(2+). Residue lysine 103 is modified to N6-carboxylysine. A substrate-binding site is contributed by histidine 140. A substrate-binding site is contributed by leucine 223. Aspartate 251 contacts Zn(2+). Residue aspartate 251 is part of the active site. Residues histidine 255 and alanine 267 each coordinate substrate.

The protein belongs to the metallo-dependent hydrolases superfamily. DHOase family. Class II DHOase subfamily. In terms of assembly, homodimer. It depends on Zn(2+) as a cofactor. Requires Co(2+) as cofactor. The cofactor is Mg(2+). Ni(2+) serves as cofactor.

It carries out the reaction (S)-dihydroorotate + H2O = N-carbamoyl-L-aspartate + H(+). It participates in pyrimidine metabolism; UMP biosynthesis via de novo pathway; (S)-dihydroorotate from bicarbonate: step 3/3. Catalyzes the reversible cyclization of carbamoyl aspartate to dihydroorotate. This is Dihydroorotase from Klebsiella pneumoniae subsp. pneumoniae (strain ATCC 700721 / MGH 78578).